The chain runs to 396 residues: Serine/threonine-protein kinase VRK1 (396 aa).

In terms of domain architecture, Protein kinase spans 37 to 317; the sequence is WKVGLPIGQG…LLDYTEKPLY (281 aa). Residues 43-51 and K71 each bind ATP; that span reads IGQGGFGCI. K71 participates in a covalent cross-link: Glycyl lysine isopeptide (Lys-Gly) (interchain with G-Cter in SUMO2). Catalysis depends on D177, which acts as the Proton acceptor. S342 bears the Phosphoserine; by PLK3 mark. The interval 354–396 is disordered; that stretch reads ITKKRKKEIEESKEPGVEDTEWSNTQTEEAIQTRSRTRKRVQK. T355 carries the post-translational modification Phosphothreonine; by autocatalysis. Basic and acidic residues predominate over residues 360 to 369; sequence KEIEESKEPG. Polar residues predominate over residues 375 to 387; sequence WSNTQTEEAIQTR. S376 is modified (phosphoserine). Residue T378 is modified to Phosphothreonine. Residues 387 to 393 form a required for interaction with the nucleosome region; that stretch reads RSRTRKR.

It belongs to the protein kinase superfamily. CK1 Ser/Thr protein kinase family. VRK subfamily. As to quaternary structure, interacts with HDAC1, KAT2B, SETDB1, KDM3A and KDM4A. Associates with the nucleosome through interactions with nucleosome DNA, histone H2A and histone H2B; the interaction with H2A and H2B is mediated by the nucleosome acidic patch, a cluster of negatively charged residues of H2A and H2B forming a cleft within the nucleosome core. (Microbial infection) Interacts with vaccinia protein B12; this interaction inhibits the repressive activity of the vaccinia virus B12 pseudokinase on viral replication factory formation. Autophosphorylated at various serine and threonine residues. Autophosphorylation does not impair its ability to phosphorylate p53/TP53. Phosphorylation by PLK3 leads to induction of Golgi fragmentation during mitosis. In terms of tissue distribution, widely expressed. Highly expressed in fetal liver, testis and thymus.

The protein localises to the nucleus. The protein resides in the cytoplasm. Its subcellular location is the cajal body. The enzyme catalyses L-seryl-[protein] + ATP = O-phospho-L-seryl-[protein] + ADP + H(+). It carries out the reaction L-threonyl-[protein] + ATP = O-phospho-L-threonyl-[protein] + ADP + H(+). With respect to regulation, active in presence of Mn(2+), Mg(2+) and Zn(2+), but is not functional with Ca(2+) or Cu(2+). Has a higher affinity for Mn(2+) than for Mg(2+). RAN inhibits its autophosphorylation and its ability to phosphorylate histone H3. Functionally, serine/threonine kinase involved in the regulation of key cellular processes including the cell cycle, nuclear condensation, transcription regulation, and DNA damage response. Controls chromatin organization and remodeling by mediating phosphorylation of histone H3 on 'Thr-4' and histone H2AX (H2aXT4ph). It also phosphorylates KAT5 in response to DNA damage, promoting KAT5 association with chromatin and histone acetyltransferase activity. Is involved in the regulation of cell cycle progression of neural progenitors, and is required for proper cortical neuronal migration. Is involved in neurite elongation and branching in motor neurons, and has an essential role in Cajal bodies assembly, acting through COIL phosphorylation and the control of coilin degradation. Involved in Golgi disassembly during the cell cycle: following phosphorylation by PLK3 during mitosis, it is required to induce Golgi fragmentation. Phosphorylates BANF1: disrupts its ability to bind DNA, reduces its binding to LEM domain-containing proteins and causes its relocalization from the nucleus to the cytoplasm. Phosphorylates TP53BP1 and p53/TP53 on 'Thr-18', preventing the interaction between p53/TP53 and MDM2. Phosphorylates ATF2 which activates its transcriptional activity. Phosphorylates JUN. This Homo sapiens (Human) protein is Serine/threonine-protein kinase VRK1.